Here is a 458-residue protein sequence, read N- to C-terminus: Transcription factor bHLH10 (458 aa).

The segment at 1–49 (MEEERESLYEEMGCFDPNTPAEVTVESSFSQAEPPPPPPQVLVAGSTSN) is disordered. Residues 243–292 (SRKSRTSPTERERRVHFNDRFFDLKNLIPNPTKIDRASIVGEAIDYIKEL) form the bHLH domain. Residues 315–338 (KRARVGEGGGGEDQEEEEDTVNYK) are disordered. Residues 324–334 (GGEDQEEEEDT) show a composition bias toward acidic residues.

Homodimer.

Its subcellular location is the nucleus. The sequence is that of Transcription factor bHLH10 (BHLH10) from Arabidopsis thaliana (Mouse-ear cress).